The following is a 506-amino-acid chain: ATP synthase subunit alpha (506 aa).

An ATP-binding site is contributed by 170 to 177 (GDRQTGKT).

This sequence belongs to the ATPase alpha/beta chains family. As to quaternary structure, F-type ATPases have 2 components, CF(1) - the catalytic core - and CF(0) - the membrane proton channel. CF(1) has five subunits: alpha(3), beta(3), gamma(1), delta(1), epsilon(1). CF(0) has four main subunits: a(1), b(1), b'(1) and c(9-12).

Its subcellular location is the cellular thylakoid membrane. The enzyme catalyses ATP + H2O + 4 H(+)(in) = ADP + phosphate + 5 H(+)(out). In terms of biological role, produces ATP from ADP in the presence of a proton gradient across the membrane. The alpha chain is a regulatory subunit. The sequence is that of ATP synthase subunit alpha from Synechococcus sp. (strain JA-2-3B'a(2-13)) (Cyanobacteria bacterium Yellowstone B-Prime).